Reading from the N-terminus, the 161-residue chain is uncharacterized protein (161 aa).

The protein to M.thermoautotrophicum MTH862.

This is an uncharacterized protein from Methanocaldococcus jannaschii (strain ATCC 43067 / DSM 2661 / JAL-1 / JCM 10045 / NBRC 100440) (Methanococcus jannaschii).